The following is a 154-amino-acid chain: D-aminoacyl-tRNA deacylase (154 aa).

A Gly-cisPro motif, important for rejection of L-amino acids motif is present at residues 142–143 (GP).

The protein belongs to the DTD family. In terms of assembly, homodimer.

Its subcellular location is the cytoplasm. It carries out the reaction glycyl-tRNA(Ala) + H2O = tRNA(Ala) + glycine + H(+). The catalysed reaction is a D-aminoacyl-tRNA + H2O = a tRNA + a D-alpha-amino acid + H(+). Its function is as follows. An aminoacyl-tRNA editing enzyme that deacylates mischarged D-aminoacyl-tRNAs. Also deacylates mischarged glycyl-tRNA(Ala), protecting cells against glycine mischarging by AlaRS. Acts via tRNA-based rather than protein-based catalysis; rejects L-amino acids rather than detecting D-amino acids in the active site. By recycling D-aminoacyl-tRNA to D-amino acids and free tRNA molecules, this enzyme counteracts the toxicity associated with the formation of D-aminoacyl-tRNA entities in vivo and helps enforce protein L-homochirality. The chain is D-aminoacyl-tRNA deacylase from Polaromonas sp. (strain JS666 / ATCC BAA-500).